The following is a 334-amino-acid chain: L-lactate dehydrogenase B chain (334 aa).

NAD(+) contacts are provided by residues 30-58 and arginine 100; that span reads GQVG…MEDR. Substrate is bound by residues arginine 107, asparagine 139, and arginine 170. Residue asparagine 139 participates in NAD(+) binding. Histidine 194 functions as the Proton acceptor in the catalytic mechanism. Threonine 249 contributes to the substrate binding site.

Belongs to the LDH/MDH superfamily. LDH family. As to quaternary structure, homotetramer.

It is found in the cytoplasm. The enzyme catalyses (S)-lactate + NAD(+) = pyruvate + NADH + H(+). It functions in the pathway fermentation; pyruvate fermentation to lactate; (S)-lactate from pyruvate: step 1/1. In terms of biological role, interconverts simultaneously and stereospecifically pyruvate and lactate with concomitant interconversion of NADH and NAD(+). This is L-lactate dehydrogenase B chain (ldhb) from Fundulus heteroclitus (Killifish).